The chain runs to 1179 residues: Probable manganese-transporting ATPase PDR2 (1179 aa).

At 1–20 (MSSFRVGGKVVEKVDLCRKK) the chain is on the cytoplasmic side. A helical membrane pass occupies residues 21 to 42 (QLVWRLDVWPFAILYTVWLTTI). The Lumenal portion of the chain corresponds to 43-50 (VPSIDFSD). Residues 51–71 (ACIALGGLSAFHILVLLFTTW) traverse the membrane as a helical segment. The Cytoplasmic segment spans residues 72-192 (SVDFKCFVQF…FDYPQPTFQK (121 aa)). A helical membrane pass occupies residues 193-215 (LMKENCMEPFFVFQVFCVGLWCL). Residues 216–218 (DEF) lie on the Lumenal side of the membrane. Residues 219–238 (WYYSVFTLFMLFMFESTMAK) form a helical membrane-spanning segment. The Cytoplasmic portion of the chain corresponds to 239-402 (SRLKTLTDLR…ERVTANSWES (164 aa)). A helical membrane pass occupies residues 403 to 422 (GLFILFLVVFAVIAAGYVLV). Residues 423–435 (KGLEDPTRSKYKL) are Lumenal-facing. Residues 436-453 (LLGCSLIITSVIPPELPM) traverse the membrane as a helical segment. Topologically, residues 454-947 (ELSIAVNTSL…RQGRSTLVTT (494 aa)) are cytoplasmic. The active-site 4-aspartylphosphate intermediate is Asp-491. Residues Asp-812 and Asp-816 each coordinate Mg(2+). The disordered stretch occupies residues 833–880 (KLPLSPSDSSKDDKSKSKKSKLPLEPASKTITQNGEGSSKGKIPPQNR). A helical transmembrane segment spans residues 948–967 (LQMFKILGLNCLATAYVLSV). Topologically, residues 968–979 (MYLDGVKLGDVQ) are lumenal. The helical transmembrane segment at 980 to 997 (ATISGVLTAAFFLFISHA) threads the bilayer. Residues 998 to 1013 (RPLQTLSAERPHPSVF) lie on the Cytoplasmic side of the membrane. The helical transmembrane segment at 1014–1034 (SVYLFLSLIGQFAVHLTFLVY) threads the bilayer. Topologically, residues 1035–1059 (SVKEAEKHMPEECIEPDASFHPNLV) are lumenal. Residues 1060 to 1079 (NTVSYMVSMMLQVATFAVNY) traverse the membrane as a helical segment. Over 1080-1092 (MGHPFNQSIRENK) the chain is Cytoplasmic. A helical membrane pass occupies residues 1093–1110 (PFFYALIAGAGFFTVIAS). The Lumenal segment spans residues 1111-1128 (DLFRDLNDSLKLVPLPQG). The chain crosses the membrane as a helical span at residues 1129 to 1148 (LRDKLLIWASLMFIICYSWE). Residues 1149–1179 (RLLRWAFPGKISSWKHKQRAVTANLEKKKKV) are Cytoplasmic-facing.

Belongs to the cation transport ATPase (P-type) (TC 3.A.3) family. Type V subfamily. In terms of tissue distribution, highly expressed in root meristem. Expressed in pavement cells of trichomes, stipules, stamens and pollen grains.

Its subcellular location is the endoplasmic reticulum membrane. It carries out the reaction ATP + H2O = ADP + phosphate + H(+). Functionally, mediates manganese transport into the endoplasmic reticulum. The ATPase activity is required for cellular manganese homeostasis. Plays an important role in pollen and root development through its impact on protein secretion and transport processes. Functions together with LPR1 and LPR2 in a common pathway that adjusts root meristem activity to phosphate availability. Under phosphate limitation, restricts SHR movement in root meristem and is required for maintaining SCR expression in the root meristem stem-cell niche as well as for proximal meristem activity. Can complement the yeast spf1 mutant. The polypeptide is Probable manganese-transporting ATPase PDR2 (PDR2) (Arabidopsis thaliana (Mouse-ear cress)).